Consider the following 92-residue polypeptide: Cell wall protein CWP2 (92 aa).

The signal sequence occupies residues 1-20 (MQFSTVASVAFVALANFVAA). One copy of the PIR1/2/3 repeat lies at 24–37 (AAISQITDGQIQAT). A disordered region spans residues 41–60 (TTEATTTAAPSSTVETVSPS). Asparagine 71 carries the GPI-anchor amidated asparagine lipid modification. A propeptide spans 72–92 (GAAKAAVGMGAGALAAAAMLL) (removed in mature form).

Belongs to the SRP1/TIP1 family. In terms of processing, extensively O-glycosylated. Post-translationally, the GPI-anchor is attached to the protein in the endoplasmic reticulum and serves to target the protein to the cell surface. There, the glucosamine-inositol phospholipid moiety is cleaved off and the GPI-modified mannoprotein is covalently attached via its lipidless GPI glycan remnant to the 1,6-beta-glucan of the outer cell wall layer. Covalently linked to beta-1,3-glucan of the inner cell wall layer via an alkali-sensitive ester linkage between the gamma-carboxyl group of glutamic acids, arising from a specific glutamine within the PIR1/2/3 repeat, and hydroxyl groups of glucoses of beta-1,3-glucan chains.

The protein localises to the secreted. It localises to the cell wall. The protein resides in the membrane. Its function is as follows. Component of the cell wall. This is Cell wall protein CWP2 (CWP2) from Saccharomyces cerevisiae (strain ATCC 204508 / S288c) (Baker's yeast).